The sequence spans 386 residues: 2,3-diketo-5-methylthiopentyl-1-phosphate enolase (386 aa).

Catalysis depends on Lys-85, which acts as the Proton acceptor. Substrate is bound by residues Lys-131, 157–160 (KDDE), His-248, Gly-316, and 338–339 (GT). 3 residues coordinate Mg(2+): Lys-157, Asp-159, and Glu-160. At Lys-157 the chain carries N6-carboxylysine.

This sequence belongs to the RuBisCO large chain family. Type IV subfamily. As to quaternary structure, homodimer. Requires Mg(2+) as cofactor.

It carries out the reaction 5-methylsulfanyl-2,3-dioxopentyl phosphate = 2-hydroxy-5-methylsulfanyl-3-oxopent-1-enyl phosphate. It functions in the pathway amino-acid biosynthesis; L-methionine biosynthesis via salvage pathway; L-methionine from S-methyl-5-thio-alpha-D-ribose 1-phosphate: step 3/6. Functionally, catalyzes the enolization of 2,3-diketo-5-methylthiopentyl-1-phosphate (DK-MTP-1-P) into 2-hydroxy-3-keto-5-methylthiopentenyl-1-phosphate (HK-MTPenyl-1-P). In Microcystis aeruginosa, this protein is 2,3-diketo-5-methylthiopentyl-1-phosphate enolase (mtnW).